We begin with the raw amino-acid sequence, 709 residues long: MFSIPVSSKTVRLILVSLLLITLINILAAFQRSTLSSWFPSSRHIINKFTDLRLALSSQESVLRDEEGEIYSLVGYHHDFDSNLVVVQKQYLLEKTPNEDTTEHFWNFLQSNFETKSEYDLNLIDGYNYKKLIKHLNEQNELQLSHSFVEQYKMENQFIQSFQNFFVQLIDTIEDCKPDLDPINNDNHYPNGDKIVKYYELRNKIPSENMKQFNIERLIHRNGRIPIYGGHLREQYKDELIRNKEFLSMYLTLSDSEISALKKSHTKFLETMMENWPENLFKFNKFNNFMKGDGIVYLGGGKYNQLVLLSIKILRENGSRLPVEVIIPYKNDYDIQFCDRVLPTLNGKCKLMTDYLPQTFVDKISGFQLKNIALLISSFERILYLDADNIPIRNPDVLFTNAPFTTKHLVVWPDLWRRSTSPHYYTIAGIEVDPNFKVRNSYVDGDERGKYTDSMYYSYHDCKGSIPEASSETGQLLINKKIHFQTLILAMYYNYYGPDYYYPLFSQGAAGEGDKETFIAAAHKLDLPYYQVGEFNREFGPINDNTRKHEFYGMGQYDPIIDYYMSTITTTQKDTKKKINYNSPLPEKYAANDEDDTCSNYDFHLFQSSSLFFLHANWPKYYIEKLFLYSYDEDRGPVTNDGDKRRLYGNELKKELGGYDFELNIMKNLHWCFCEEPLIDLIGIPVVGSKTRTDVCIAIKNHIEFLEIS.

Topologically, residues 1 to 9 (MFSIPVSSK) are cytoplasmic. The helical transmembrane segment at 10–30 (TVRLILVSLLLITLINILAAF) threads the bilayer. At 31-709 (QRSTLSSWFP…KNHIEFLEIS (679 aa)) the chain is on the extracellular side. Residue asparagine 317 is glycosylated (N-linked (GlcNAc...) asparagine).

This sequence belongs to the MNN1/MNT family.

The protein localises to the golgi apparatus membrane. It functions in the pathway protein modification; protein glycosylation. Its function is as follows. Alpha-1,2-mannosyltransferase required for cell wall integrity. Responsible for addition of the first alpha-1,2-linked mannose to form the branches on the mannan backbone of oligosaccharides. Addition of alpha-1,2-mannose is required for stabilization of the alpha-1,6-mannose backbone and hence regulates mannan fibril length; and is important for both immune recognition and virulence. This chain is Alpha-1,2-mannosyltransferase MNN24 (MNN24), found in Candida albicans (strain SC5314 / ATCC MYA-2876) (Yeast).